The sequence spans 194 residues: Yellow fluorescent protein (194 aa).

Lumazine-binding repeat units follow at residues 1–98 (MFKG…SGGH) and 99–194 (ILSA…NQCW). 179–183 (KVNVE) provides a ligand contact to FMN.

Homodimer. FMN is required as a cofactor.

Functionally, antenna protein that modulates the color of the bioluminescence emission of the luciferase. In the presence of YFP and only at temperatures below 20 degrees Celsius, luciferase exhibits a bimodal emission spectrum with a new peak at 545 nM (yellow), in addition to the one at 485 nM. In Aliivibrio fischeri (Vibrio fischeri), this protein is Yellow fluorescent protein (luxY).